The following is a 358-amino-acid chain: 3-dehydroquinate synthase (358 aa).

NAD(+)-binding positions include 102-106 (GVVGD), 126-127 (TT), lysine 138, and lysine 147. Zn(2+) contacts are provided by glutamate 180, histidine 243, and histidine 260.

Belongs to the sugar phosphate cyclases superfamily. Dehydroquinate synthase family. Requires Co(2+) as cofactor. It depends on Zn(2+) as a cofactor. NAD(+) is required as a cofactor.

The protein resides in the cytoplasm. It catalyses the reaction 7-phospho-2-dehydro-3-deoxy-D-arabino-heptonate = 3-dehydroquinate + phosphate. Its pathway is metabolic intermediate biosynthesis; chorismate biosynthesis; chorismate from D-erythrose 4-phosphate and phosphoenolpyruvate: step 2/7. Catalyzes the conversion of 3-deoxy-D-arabino-heptulosonate 7-phosphate (DAHP) to dehydroquinate (DHQ). In Shouchella clausii (strain KSM-K16) (Alkalihalobacillus clausii), this protein is 3-dehydroquinate synthase.